The following is a 637-amino-acid chain: Biosynthetic arginine decarboxylase (637 aa).

Position 101 is an N6-(pyridoxal phosphate)lysine (lysine 101). Phenylalanine 286 to tyrosine 296 contacts substrate.

It belongs to the Orn/Lys/Arg decarboxylase class-II family. SpeA subfamily. Mg(2+) serves as cofactor. It depends on pyridoxal 5'-phosphate as a cofactor.

The catalysed reaction is L-arginine + H(+) = agmatine + CO2. It functions in the pathway amine and polyamine biosynthesis; agmatine biosynthesis; agmatine from L-arginine: step 1/1. Catalyzes the biosynthesis of agmatine from arginine. The polypeptide is Biosynthetic arginine decarboxylase (Shewanella sp. (strain ANA-3)).